Reading from the N-terminus, the 38-residue chain is Large ribosomal subunit protein bL36 (38 aa).

The protein belongs to the bacterial ribosomal protein bL36 family.

This Chlorobium limicola (strain DSM 245 / NBRC 103803 / 6330) protein is Large ribosomal subunit protein bL36.